The primary structure comprises 241 residues: NLP effector protein 7 (241 aa).

The signal sequence occupies residues 1–19; it reads MHLCALLIAAAGVLASVRA. The Conserved undecapeptide motif motif lies at 105–115; that stretch reads AIMYAWYFPKA. Positions 125 to 131 match the Conserved heptapeptide motif motif; it reads GSRHYWL. N-linked (GlcNAc...) asparagine glycosylation is present at Asn144.

Belongs to the Necrosis inducing protein (NPP1) family.

Its subcellular location is the secreted. Its function is as follows. Secreted effector that acts as a pathogen-associated molecular pattern (PAMP) recognized by the plant immune system. Induces necrosis in Nicotiana benthamiana leaves and can induce Phytophthora capsici resistance in Nicotiana benthamiana. Also significantly improves disease resistance of Arabidopsis thaliana to Hyaloperonospora arabidopsidis. causes an inhibition of plant growth which is typically associated with enhanced immunity when over-expressed in Arabidopsis. The sequence is that of NLP effector protein 7 from Plasmopara viticola (Downy mildew of grapevine).